Reading from the N-terminus, the 619-residue chain is Dihydroxy-acid dehydratase (619 aa).

Asp81 is a Mg(2+) binding site. A [2Fe-2S] cluster-binding site is contributed by Cys122. Asp123 and Lys124 together coordinate Mg(2+). Lys124 carries the post-translational modification N6-carboxylysine. Position 201 (Cys201) interacts with [2Fe-2S] cluster. Glu496 is a Mg(2+) binding site. Ser522 acts as the Proton acceptor in catalysis.

It belongs to the IlvD/Edd family. In terms of assembly, homodimer. Requires [2Fe-2S] cluster as cofactor. Mg(2+) serves as cofactor.

The catalysed reaction is (2R)-2,3-dihydroxy-3-methylbutanoate = 3-methyl-2-oxobutanoate + H2O. It carries out the reaction (2R,3R)-2,3-dihydroxy-3-methylpentanoate = (S)-3-methyl-2-oxopentanoate + H2O. Its pathway is amino-acid biosynthesis; L-isoleucine biosynthesis; L-isoleucine from 2-oxobutanoate: step 3/4. It participates in amino-acid biosynthesis; L-valine biosynthesis; L-valine from pyruvate: step 3/4. Its function is as follows. Functions in the biosynthesis of branched-chain amino acids. Catalyzes the dehydration of (2R,3R)-2,3-dihydroxy-3-methylpentanoate (2,3-dihydroxy-3-methylvalerate) into 2-oxo-3-methylpentanoate (2-oxo-3-methylvalerate) and of (2R)-2,3-dihydroxy-3-methylbutanoate (2,3-dihydroxyisovalerate) into 2-oxo-3-methylbutanoate (2-oxoisovalerate), the penultimate precursor to L-isoleucine and L-valine, respectively. This chain is Dihydroxy-acid dehydratase, found in Paracidovorax citrulli (strain AAC00-1) (Acidovorax citrulli).